Here is a 1122-residue protein sequence, read N- to C-terminus: Phytochrome A (1122 aa).

The segment covering 1–11 (MSGSRPTQSSE) has biased composition (polar residues). The disordered stretch occupies residues 1-21 (MSGSRPTQSSEGSRRSRHSAR). The 185-residue stretch at 218–402 (SMERLCDTMV…VFAIHVNKEV (185 aa)) folds into the GAF domain. Cys323 contributes to the phytochromobilin binding site. A PAS 1 domain is found at 618–688 (VTSEMVRLIE…RMLENALEGT (71 aa)). The 53-residue stretch at 695–747 (FEIKTHLSRADAGPISLVVNACASRDLHENVVGVCFVAHDLTGQKTVMDKFTR) folds into the PAC domain. In terms of domain architecture, PAS 2 spans 748-822 (IEGDYKAIIQ…KNQEAFVNLG (75 aa)). The Histidine kinase domain maps to 902–1119 (YIKRQIRNPL…SFIITAELAA (218 aa)).

This sequence belongs to the phytochrome family. In terms of assembly, homodimer. Interacts with NDPK2 and PKS4. Stabilized by interactions with PAPP5 and FYPP3 which are enhanced in the phosphorylated Pfr form. Interacts with COP1/SPA1 complex. Binds, via its photosensory domain, to PTAC12/HMR when photoactivated; this interaction stimulates its localization to photobodies. Interacts with FHY1, FHL and FHY3, especially upon far-red (FR) light illumination; when underphosphorylated. Forms PHYA/FHY1/HFR1 complex. Binds to PIF3/PAP3. In terms of processing, phosphorylated. Contains one covalently linked phytochromobilin chromophore. Expressed in fruits, flowers, leaves, stems, seedlings and roots.

The protein localises to the cytoplasm. The protein resides in the nucleus. Its subcellular location is the nucleoplasm. It is found in the nucleus speckle. Functionally, regulatory photoreceptor which exists in two forms that are reversibly interconvertible by light: the Pr form that absorbs maximally in the red region of the spectrum and the Pfr form that absorbs maximally in the far-red region. Photoconversion of Pr to Pfr induces an array of morphogenetic responses, whereas reconversion of Pfr to Pr cancels the induction of those responses. Pfr controls the expression of a number of nuclear genes including those encoding the small subunit of ribulose-bisphosphate carboxylase, chlorophyll A/B binding protein, protochlorophyllide reductase, rRNA, etc. It also controls the expression of its own gene(s) in a negative feedback fashion. Involved in the flowering time regulation. Can phosphorylate FHY1 and, possibly, FHL, in red light conditions; this inactivates their co-shuttling to the nucleus. Regulates phototropic responses both in the nucleus (e.g. hypocotyl elongation and cotyledon opening under high-irradiance conditions and seed germination under very-low-fluence conditions) and in the cytoplasm (e.g. negative gravitropism in blue light and red-enhanced phototropism). Promotes seed germination, suppression of hypocotyl elongation, and randomization of hypocotyl growth orientation in far-red light; these responses to far-red light are repressed by UNE10/PIF8. Stabilizes UNE10/PIF8 but sequesters PIF3/PAP3 from its target genes promoters in far-red light. This is Phytochrome A from Arabidopsis thaliana (Mouse-ear cress).